The sequence spans 615 residues: DNA mismatch repair protein MutL (615 aa).

A disordered region spans residues 369–397; the sequence is REPVAPRYTPAPASGSRPAAPWPNAQPGY. Positions 378-391 are enriched in low complexity; it reads PAPASGSRPAAPWP.

It belongs to the DNA mismatch repair MutL/HexB family.

In terms of biological role, this protein is involved in the repair of mismatches in DNA. It is required for dam-dependent methyl-directed DNA mismatch repair. May act as a 'molecular matchmaker', a protein that promotes the formation of a stable complex between two or more DNA-binding proteins in an ATP-dependent manner without itself being part of a final effector complex. The protein is DNA mismatch repair protein MutL of Escherichia coli (strain SMS-3-5 / SECEC).